We begin with the raw amino-acid sequence, 200 residues long: Cysteine dioxygenase type 1 (200 aa).

H86, H88, and H140 together coordinate Fe cation. Positions 93–157 (CFLKMLQGNL…TEPAVSLHLY (65 aa)) form a cross-link, 3'-(S-cysteinyl)-tyrosine (Cys-Tyr).

This sequence belongs to the cysteine dioxygenase family. In terms of assembly, monomer. It depends on Fe(2+) as a cofactor. The cofactor is Ni(2+). Requires Zn(2+) as cofactor. In terms of processing, the thioether cross-link between Cys-93 and Tyr-157 plays a structural role through stabilizing the Fe(2+) ion, and prevents the production of highly damaging free hydroxyl radicals by holding the oxygen radical via hydroxyl hydrogen. In terms of tissue distribution, highly expressed in liver and placenta. Low expression in heart, brain and pancreas. Also detected in hepatoblastoma Hep-G2 cells.

It carries out the reaction L-cysteine + O2 = 3-sulfino-L-alanine + H(+). Its pathway is organosulfur biosynthesis; taurine biosynthesis; hypotaurine from L-cysteine: step 1/2. In terms of biological role, catalyzes the oxidation of cysteine to cysteine sulfinic acid with addition of molecular dioxygen. This Homo sapiens (Human) protein is Cysteine dioxygenase type 1 (CDO1).